A 118-amino-acid chain; its full sequence is Large ribosomal subunit protein bL20 (118 aa).

The protein belongs to the bacterial ribosomal protein bL20 family.

Functionally, binds directly to 23S ribosomal RNA and is necessary for the in vitro assembly process of the 50S ribosomal subunit. It is not involved in the protein synthesizing functions of that subunit. The polypeptide is Large ribosomal subunit protein bL20 (rplT) (Aquifex aeolicus (strain VF5)).